We begin with the raw amino-acid sequence, 210 residues long: Ras-related protein Rab-2-B (210 aa).

Residue 13 to 21 (GDTGVGKSC) coordinates GTP. The Effector region motif lies at 35 to 43 (HDLTIGVEF). GTP-binding positions include 61–65 (DTAGQ), 119–122 (NKCD), and 149–151 (SAK). Residues C208 and C209 are each lipidated (S-geranylgeranyl cysteine).

This sequence belongs to the small GTPase superfamily. Rab family.

It is found in the endoplasmic reticulum membrane. The protein resides in the golgi apparatus membrane. Protein transport. Probably involved in vesicular traffic. This is Ras-related protein Rab-2-B (RAB2B) from Zea mays (Maize).